Consider the following 200-residue polypeptide: NADH-quinone oxidoreductase subunit C (200 aa).

It belongs to the complex I 30 kDa subunit family. As to quaternary structure, NDH-1 is composed of 14 different subunits. Subunits NuoB, C, D, E, F, and G constitute the peripheral sector of the complex.

The protein resides in the cell inner membrane. The enzyme catalyses a quinone + NADH + 5 H(+)(in) = a quinol + NAD(+) + 4 H(+)(out). In terms of biological role, NDH-1 shuttles electrons from NADH, via FMN and iron-sulfur (Fe-S) centers, to quinones in the respiratory chain. The immediate electron acceptor for the enzyme in this species is believed to be ubiquinone. Couples the redox reaction to proton translocation (for every two electrons transferred, four hydrogen ions are translocated across the cytoplasmic membrane), and thus conserves the redox energy in a proton gradient. This Burkholderia vietnamiensis (strain G4 / LMG 22486) (Burkholderia cepacia (strain R1808)) protein is NADH-quinone oxidoreductase subunit C.